Here is a 402-residue protein sequence, read N- to C-terminus: Nicotinate phosphoribosyltransferase (402 aa).

Position 221 is a phosphohistidine; by autocatalysis (histidine 221).

It belongs to the NAPRTase family. Transiently phosphorylated on a His residue during the reaction cycle. Phosphorylation strongly increases the affinity for substrates and increases the rate of nicotinate D-ribonucleotide production. Dephosphorylation regenerates the low-affinity form of the enzyme, leading to product release.

The enzyme catalyses nicotinate + 5-phospho-alpha-D-ribose 1-diphosphate + ATP + H2O = nicotinate beta-D-ribonucleotide + ADP + phosphate + diphosphate. Its pathway is cofactor biosynthesis; NAD(+) biosynthesis; nicotinate D-ribonucleotide from nicotinate: step 1/1. In terms of biological role, catalyzes the synthesis of beta-nicotinate D-ribonucleotide from nicotinate and 5-phospho-D-ribose 1-phosphate at the expense of ATP. The polypeptide is Nicotinate phosphoribosyltransferase (Sodalis glossinidius (strain morsitans)).